Here is a 333-residue protein sequence, read N- to C-terminus: Adenosine deaminase (333 aa).

Zn(2+) contacts are provided by His12 and His14. Substrate-binding residues include His14, Asp16, and Gly170. His197 serves as a coordination point for Zn(2+). Glu200 (proton donor) is an active-site residue. Asp278 is a Zn(2+) binding site. Asp279 is a binding site for substrate.

This sequence belongs to the metallo-dependent hydrolases superfamily. Adenosine and AMP deaminases family. Adenosine deaminase subfamily. Zn(2+) is required as a cofactor.

The enzyme catalyses adenosine + H2O + H(+) = inosine + NH4(+). It carries out the reaction 2'-deoxyadenosine + H2O + H(+) = 2'-deoxyinosine + NH4(+). Its function is as follows. Catalyzes the hydrolytic deamination of adenosine and 2-deoxyadenosine. This chain is Adenosine deaminase, found in Escherichia coli (strain SMS-3-5 / SECEC).